We begin with the raw amino-acid sequence, 138 residues long: Ribosome-binding factor A (138 aa).

It belongs to the RbfA family. As to quaternary structure, monomer. Binds 30S ribosomal subunits, but not 50S ribosomal subunits or 70S ribosomes.

The protein resides in the cytoplasm. One of several proteins that assist in the late maturation steps of the functional core of the 30S ribosomal subunit. Associates with free 30S ribosomal subunits (but not with 30S subunits that are part of 70S ribosomes or polysomes). Required for efficient processing of 16S rRNA. May interact with the 5'-terminal helix region of 16S rRNA. This Bradyrhizobium sp. (strain BTAi1 / ATCC BAA-1182) protein is Ribosome-binding factor A.